The chain runs to 177 residues: Acireductone dioxygenase (177 aa).

Fe(2+)-binding residues include His99, His101, Glu105, and His143. Residues His99, His101, Glu105, and His143 each coordinate Ni(2+).

The protein belongs to the acireductone dioxygenase (ARD) family. As to quaternary structure, monomer. The cofactor is Fe(2+). It depends on Ni(2+) as a cofactor.

It catalyses the reaction 1,2-dihydroxy-5-(methylsulfanyl)pent-1-en-3-one + O2 = 3-(methylsulfanyl)propanoate + CO + formate + 2 H(+). The catalysed reaction is 1,2-dihydroxy-5-(methylsulfanyl)pent-1-en-3-one + O2 = 4-methylsulfanyl-2-oxobutanoate + formate + 2 H(+). It participates in amino-acid biosynthesis; L-methionine biosynthesis via salvage pathway; L-methionine from S-methyl-5-thio-alpha-D-ribose 1-phosphate: step 5/6. Its function is as follows. Catalyzes 2 different reactions between oxygen and the acireductone 1,2-dihydroxy-3-keto-5-methylthiopentene (DHK-MTPene) depending upon the metal bound in the active site. Fe-containing acireductone dioxygenase (Fe-ARD) produces formate and 2-keto-4-methylthiobutyrate (KMTB), the alpha-ketoacid precursor of methionine in the methionine recycle pathway. Ni-containing acireductone dioxygenase (Ni-ARD) produces methylthiopropionate, carbon monoxide and formate, and does not lie on the methionine recycle pathway. The sequence is that of Acireductone dioxygenase from Leptospira borgpetersenii serovar Hardjo-bovis (strain L550).